We begin with the raw amino-acid sequence, 133 residues long: Aspartate 1-decarboxylase (133 aa).

The Schiff-base intermediate with substrate; via pyruvic acid role is filled by serine 26. The residue at position 26 (serine 26) is a Pyruvic acid (Ser). Threonine 58 contributes to the substrate binding site. Tyrosine 59 acts as the Proton donor in catalysis. A substrate-binding site is contributed by 74–76 (GAA).

The protein belongs to the PanD family. In terms of assembly, heterooctamer of four alpha and four beta subunits. The cofactor is pyruvate. Is synthesized initially as an inactive proenzyme, which is activated by self-cleavage at a specific serine bond to produce a beta-subunit with a hydroxyl group at its C-terminus and an alpha-subunit with a pyruvoyl group at its N-terminus.

Its subcellular location is the cytoplasm. It catalyses the reaction L-aspartate + H(+) = beta-alanine + CO2. The protein operates within cofactor biosynthesis; (R)-pantothenate biosynthesis; beta-alanine from L-aspartate: step 1/1. Functionally, catalyzes the pyruvoyl-dependent decarboxylation of aspartate to produce beta-alanine. In Legionella pneumophila (strain Paris), this protein is Aspartate 1-decarboxylase.